The following is a 202-amino-acid chain: HTH-type transcriptional regulator BetI (202 aa).

An HTH tetR-type domain is found at 8 to 68 (PIRRRQLIDA…ATMRDITRQL (61 aa)). Residues 31–50 (TIAQIARRAGVSAGIISHYF) constitute a DNA-binding region (H-T-H motif).

Its pathway is amine and polyamine biosynthesis; betaine biosynthesis via choline pathway [regulation]. Its function is as follows. Repressor involved in the biosynthesis of the osmoprotectant glycine betaine. It represses transcription of the choline transporter BetT and the genes of BetAB involved in the synthesis of glycine betaine. In Cronobacter sakazakii (strain ATCC BAA-894) (Enterobacter sakazakii), this protein is HTH-type transcriptional regulator BetI.